The sequence spans 64 residues: Metallothionein-A (64 aa).

The protein belongs to the metallothionein superfamily. Type 4 family.

In terms of biological role, metallothioneins have a high content of cysteine residues that bind various heavy metals. This chain is Metallothionein-A (MTA), found in Strongylocentrotus purpuratus (Purple sea urchin).